Here is a 558-residue protein sequence, read N- to C-terminus: Arginine--tRNA ligase (558 aa).

The 'HIGH' region signature appears at 116–126; that stretch reads ANPNGPLHVGH.

The protein belongs to the class-I aminoacyl-tRNA synthetase family.

It localises to the cytoplasm. The catalysed reaction is tRNA(Arg) + L-arginine + ATP = L-arginyl-tRNA(Arg) + AMP + diphosphate. The chain is Arginine--tRNA ligase from Methanocorpusculum labreanum (strain ATCC 43576 / DSM 4855 / Z).